The following is a 295-amino-acid chain: Probable WRKY transcription factor 46 (295 aa).

A DNA-binding region (WRKY) is located at residues 98 to 166; that stretch reads QENGSIDDGH…YLGNHTCNNI (69 aa).

Belongs to the WRKY group III family. As to quaternary structure, binds to BZR2/BES1 to cooperatively regulate the expression of target genes. Post-translationally, phosphorylated and destabilized by ASK7/BIN2. As to expression, expressed in guard cells, hypocotyls, and in the vascular tissues of cotyledon and root. Mostly expressed in roots, at lower levels in leaves and petioles, and, to a lower extent, in stems, flowers and siliques.

The protein localises to the nucleus. Transcription factor involved in the regulation of osmotic stress responses and stomatal movement. Interacts specifically with the W box (5'-(T)TGAC[CT]-3'), a frequently occurring elicitor-responsive cis-acting element. Positive regulator of EDS1-dependent defense against E.amylovora. Together with WRKY70 and WRKY53, promotes resistance to P.syringae, probably by enhancing salicylic acid (SA)- dependent genes. Contributes to the suppression of jasmonic acid (MeJA)-induced expression of PDF1.2. Together with WRKY54 and WRKY70, promotes brassinosteroid (BR)-regulated plant growth but prevent drought response by modulating gene expression. The polypeptide is Probable WRKY transcription factor 46 (WRKY46) (Arabidopsis thaliana (Mouse-ear cress)).